The following is a 139-amino-acid chain: Putative pre-16S rRNA nuclease (139 aa).

This sequence belongs to the YqgF nuclease family.

It is found in the cytoplasm. Its function is as follows. Could be a nuclease involved in processing of the 5'-end of pre-16S rRNA. The sequence is that of Putative pre-16S rRNA nuclease from Bacillus licheniformis (strain ATCC 14580 / DSM 13 / JCM 2505 / CCUG 7422 / NBRC 12200 / NCIMB 9375 / NCTC 10341 / NRRL NRS-1264 / Gibson 46).